The chain runs to 118 residues: Large ribosomal subunit protein uL22 (118 aa).

This sequence belongs to the universal ribosomal protein uL22 family. Part of the 50S ribosomal subunit.

In terms of biological role, this protein binds specifically to 23S rRNA; its binding is stimulated by other ribosomal proteins, e.g. L4, L17, and L20. It is important during the early stages of 50S assembly. It makes multiple contacts with different domains of the 23S rRNA in the assembled 50S subunit and ribosome. Functionally, the globular domain of the protein is located near the polypeptide exit tunnel on the outside of the subunit, while an extended beta-hairpin is found that lines the wall of the exit tunnel in the center of the 70S ribosome. This chain is Large ribosomal subunit protein uL22, found in Leuconostoc mesenteroides subsp. mesenteroides (strain ATCC 8293 / DSM 20343 / BCRC 11652 / CCM 1803 / JCM 6124 / NCDO 523 / NBRC 100496 / NCIMB 8023 / NCTC 12954 / NRRL B-1118 / 37Y).